The chain runs to 194 residues: HTH-type transcriptional regulator BetI (194 aa).

Residues 8–68 (PLRRRELIDA…ATMRHLLREL (61 aa)) form the HTH tetR-type domain. A DNA-binding region (H-T-H motif) is located at residues 31–50 (TVAQIAHEAGVSPALAHHYF).

Its pathway is amine and polyamine biosynthesis; betaine biosynthesis via choline pathway [regulation]. In terms of biological role, repressor involved in the biosynthesis of the osmoprotectant glycine betaine. It represses transcription of the choline transporter BetT and the genes of BetAB involved in the synthesis of glycine betaine. The polypeptide is HTH-type transcriptional regulator BetI (Brucella anthropi (strain ATCC 49188 / DSM 6882 / CCUG 24695 / JCM 21032 / LMG 3331 / NBRC 15819 / NCTC 12168 / Alc 37) (Ochrobactrum anthropi)).